The sequence spans 499 residues: Glycerol kinase (499 aa).

Thr-17 is a binding site for ADP. Residues Thr-17, Thr-18, and Ser-19 each coordinate ATP. Thr-17 lines the sn-glycerol 3-phosphate pocket. An ADP-binding site is contributed by Arg-21. Residues Arg-87, Glu-88, Tyr-139, and Asp-243 each coordinate sn-glycerol 3-phosphate. Glycerol contacts are provided by Arg-87, Glu-88, Tyr-139, Asp-243, and Gln-244. Residues Thr-265 and Gly-308 each coordinate ADP. The ATP site is built by Thr-265, Gly-308, Gln-312, and Gly-409. Residues Gly-409 and Asn-413 each coordinate ADP.

The protein belongs to the FGGY kinase family.

It catalyses the reaction glycerol + ATP = sn-glycerol 3-phosphate + ADP + H(+). Its pathway is polyol metabolism; glycerol degradation via glycerol kinase pathway; sn-glycerol 3-phosphate from glycerol: step 1/1. Inhibited by fructose 1,6-bisphosphate (FBP). In terms of biological role, key enzyme in the regulation of glycerol uptake and metabolism. Catalyzes the phosphorylation of glycerol to yield sn-glycerol 3-phosphate. In Pseudomonas putida (strain GB-1), this protein is Glycerol kinase.